We begin with the raw amino-acid sequence, 373 residues long: Phosphoserine aminotransferase (373 aa).

Position 47 (arginine 47) interacts with L-glutamate. Pyridoxal 5'-phosphate contacts are provided by residues 81–82 (AR), tryptophan 113, threonine 164, aspartate 185, and glutamine 208. The residue at position 209 (lysine 209) is an N6-(pyridoxal phosphate)lysine. 250 to 251 (NT) lines the pyridoxal 5'-phosphate pocket.

Belongs to the class-V pyridoxal-phosphate-dependent aminotransferase family. SerC subfamily. As to quaternary structure, homodimer. Pyridoxal 5'-phosphate serves as cofactor.

The protein resides in the cytoplasm. It catalyses the reaction O-phospho-L-serine + 2-oxoglutarate = 3-phosphooxypyruvate + L-glutamate. It carries out the reaction 4-(phosphooxy)-L-threonine + 2-oxoglutarate = (R)-3-hydroxy-2-oxo-4-phosphooxybutanoate + L-glutamate. Its pathway is amino-acid biosynthesis; L-serine biosynthesis; L-serine from 3-phospho-D-glycerate: step 2/3. It functions in the pathway cofactor biosynthesis; pyridoxine 5'-phosphate biosynthesis; pyridoxine 5'-phosphate from D-erythrose 4-phosphate: step 3/5. In terms of biological role, catalyzes the reversible conversion of 3-phosphohydroxypyruvate to phosphoserine and of 3-hydroxy-2-oxo-4-phosphonooxybutanoate to phosphohydroxythreonine. The sequence is that of Phosphoserine aminotransferase from Buchnera aphidicola subsp. Baizongia pistaciae (strain Bp).